Reading from the N-terminus, the 380-residue chain is Cell division protein FtsZ 2 (380 aa).

Residues 47–51 (GAGNN), 134–136 (GTG), Glu165, Arg168, and Asp211 each bind GTP.

Belongs to the FtsZ family. As to quaternary structure, homodimer. Polymerizes to form a dynamic ring structure in a strictly GTP-dependent manner. Interacts directly with several other division proteins.

The protein resides in the cytoplasm. Functionally, essential cell division protein that forms a contractile ring structure (Z ring) at the future cell division site. The regulation of the ring assembly controls the timing and the location of cell division. One of the functions of the FtsZ ring is to recruit other cell division proteins to the septum to produce a new cell wall between the dividing cells. Binds GTP and shows GTPase activity. In Methanocaldococcus jannaschii (strain ATCC 43067 / DSM 2661 / JAL-1 / JCM 10045 / NBRC 100440) (Methanococcus jannaschii), this protein is Cell division protein FtsZ 2.